A 3010-amino-acid polypeptide reads, in one-letter code: Genome polyprotein (3010 aa).

Serine 2 carries the N-acetylserine; by host modification. Residues 2 to 23 (STNGKPQRKTKRNTNRRPQDVK) form an interaction with STAT1 region. An interaction with EIF2AK2/PKR region spans residues 2-58 (STNGKPQRKTKRNTNRRPQDVKFPGGGQIVGGVYLLPRRGPRLGVRATRKTWERSQP). Positions 2–59 (STNGKPQRKTKRNTNRRPQDVKFPGGGQIVGGVYLLPRRGPRLGVRATRKTWERSQPR) are interaction with DDX3X. The disordered stretch occupies residues 2-75 (STNGKPQRKT…PKARQPEGRA (74 aa)). The Cytoplasmic segment spans residues 2–168 (STNGKPQRKT…EDGVNYATGN (167 aa)). 4 consecutive short sequence motifs (nuclear localization signal) follow at residues 5-13 (GKPQRKTKR), 38-43 (PRRGPR), 58-64 (PRGRRQP), and 66-71 (PKARQP). Positions 7–16 (PQRKTKRNTN) are enriched in basic residues. Serine 99 is subject to Phosphoserine; by host. The segment at 112 to 152 (PRRRSRNLGKVIDTLTCGFADLMGYIPLVGAPLGGVARALA) is important for endoplasmic reticulum and mitochondrial localization. Phosphoserine; by host PKA is present on serine 116. The interval 122 to 173 (VIDTLTCGFADLMGYIPLVGAPLGGVARALAHGVRVLEDGVNYATGNLPGCS) is interaction with APOA2. Positions 164–167 (YATG) are important for lipid droplets localization. Residues 169-189 (LPGCSFSIFLLALLSCLTIPA) form a helical membrane-spanning segment. Positions 178–191 (LLALLSCLTIPASA) are cleaved as a propeptide — ER anchor for the core protein, removed in mature form by host signal peptidase. Topologically, residues 190 to 358 (SAYEVHNVSG…GGAHWGVLAG (169 aa)) are lumenal. N-linked (GlcNAc...) asparagine; by host glycans are attached at residues asparagine 196, asparagine 209, asparagine 234, and asparagine 250. Positions 265–296 (LVGAAAFCSAMYVGDLCGSVFLVSQLFTFSPR) are important for fusion. N-linked (GlcNAc...) asparagine; by host glycosylation is present at asparagine 305. Residues 359 to 379 (LAYYSMVGNWAKVLIVMLLFA) traverse the membrane as a helical segment. The Lumenal portion of the chain corresponds to 380 to 725 (GVDGSTIVSG…WEYILLLFLL (346 aa)). The segment at 385-411 (TIVSGGTVARTTHSLASLFTQGASQKI) is HVR1. Asparagine 417, asparagine 423, asparagine 430, and asparagine 448 each carry an N-linked (GlcNAc...) (high mannose) asparagine; by host glycan. 4 disulfide bridges follow: cysteine 429/cysteine 552, cysteine 452/cysteine 459, cysteine 486/cysteine 494, and cysteine 503/cysteine 508. The HVR2 stretch occupies residues 474-479 (YTEADI). Positions 480 to 493 (QDQRPYCWHYAPRP) are CD81-binding 1. Asparagine 532 carries an N-linked (GlcNAc...) (high mannose) asparagine; by host glycan. Asparagine 540 carries N-linked (GlcNAc...) asparagine; by host glycosylation. A CD81-binding 2 region spans residues 544–551 (PPQGNWFG). Residue asparagine 556 is glycosylated (N-linked (GlcNAc...) (high mannose) asparagine; by host). The cysteines at positions 564 and 569 are disulfide-linked. N-linked (GlcNAc...) (high mannose) asparagine; by host glycosylation is present at asparagine 576. 3 disulfides stabilise this stretch: cysteine 581–cysteine 585, cysteine 597–cysteine 620, and cysteine 607–cysteine 644. N-linked (GlcNAc...) (high mannose) asparagine; by host glycans are attached at residues asparagine 623 and asparagine 645. Cysteines 652 and 677 form a disulfide. The PKR/eIF2-alpha phosphorylation homology domain (PePHD) stretch occupies residues 660–671 (SELSPLLLSTTE). Residues 726-746 (LADARVCACLWMMLLIAQAEA) traverse the membrane as a helical segment. Residues 747-757 (ALENLVVFNAA) are Lumenal-facing. Residues 758–778 (SVAGMHGTLSFLVFFCAAWYI) form a helical membrane-spanning segment. Over 779–781 (KGR) the chain is Cytoplasmic. The chain crosses the membrane as a helical span at residues 782–803 (LVPGAAYALYGVWPLLLLLLAL). The Lumenal segment spans residues 804–813 (PPRAYAMDRE). The helical transmembrane segment at 814 to 834 (MAASCGGAVFVGLVLLTLSPH) threads the bilayer. Topologically, residues 835 to 838 (YKMF) are cytoplasmic. Residues 839 to 859 (LARLIWWLQYFITRAEAHLQV) form a helical membrane-spanning segment. The Lumenal segment spans residues 860-881 (WIPPLNVRGGRDAIILLTCAAY). A helical transmembrane segment spans residues 882 to 902 (PELIFDITKILLAILGPLMVL). One can recognise a Peptidase C18 domain in the interval 903 to 1026 (QAGLTRIPYF…SLEGRGWRLL (124 aa)). Over 903 to 1657 (QAGLTRIPYF…CMSADLEVVT (755 aa)) the chain is Cytoplasmic. The protease NS2-3 stretch occupies residues 904–1206 (AGLTRIPYFV…PVESMETTMR (303 aa)). Cysteine 922 carries S-palmitoyl cysteine; by host lipidation. An interaction with host SCPS1 region spans residues 929–949 (AGGHYVQMALMKLAALTGTYV). Active-site for protease NS2 activity; shared with dimeric partner residues include histidine 952, glutamate 972, and cysteine 993. Residues 1027–1208 (APITAYAQQT…ESMETTMRSP (182 aa)) enclose the Peptidase S29 domain. Active-site charge relay system; for serine protease NS3 activity residues include histidine 1083 and aspartate 1107. Residues cysteine 1123 and cysteine 1125 each coordinate Zn(2+). The Charge relay system; for serine protease NS3 activity role is filled by serine 1165. Zn(2+)-binding residues include cysteine 1171 and histidine 1175. Residues 1217–1369 (PAVPQAFQVA…PNIEEIALSN (153 aa)) enclose the Helicase ATP-binding domain. 1230-1237 (APTGSGKS) is an ATP binding site. Residues serine 1237 and glutamate 1317 each coordinate Mg(2+). The short motif at 1316 to 1319 (DECH) is the DECH box element. An RNA-binding region spans residues 1486–1497 (QRRGRTSRGRRG). The chain crosses the membrane as a helical span at residues 1658–1678 (STWVLVGGVLAALAAYCLTTG). The NS3-binding stretch occupies residues 1679–1690 (SVVIVGRIILSG). Residues 1679–1805 (SVVIVGRIIL…SITSPLTTQS (127 aa)) lie on the Cytoplasmic side of the membrane. The helical transmembrane segment at 1806–1824 (TLLFNILGGWVAAQLAPPG) threads the bilayer. Residues 1825-1828 (AASA) lie on the Lumenal side of the membrane. The helical transmembrane segment at 1829–1849 (FVGAGIAGAAVGSIGLGKVLV) threads the bilayer. Residue aspartate 1850 is a topological domain, cytoplasmic. Residues 1851–1871 (MVAGYGAGVAGALVAFKVMSG) traverse the membrane as a helical segment. The Lumenal segment spans residues 1872–1881 (EMPSTEDLVN). A helical membrane pass occupies residues 1882–1902 (LLPAILSPGALVVGVVCAAIL). Topologically, residues 1903 to 1972 (RRHVDPGEGA…WINEDCSTPC (70 aa)) are cytoplasmic. Residues cysteine 1968 and cysteine 1972 are each lipidated (S-palmitoyl cysteine; by host). An intramembrane segment occupies 1973–2002 (SGSWLRDVWDWICTVLADFKTWLQSKLLPR). At 2003–2989 (LPGVPFFSCQ…YHSLSRARPR (987 aa)) the chain is on the cytoplasmic side. Zn(2+) contacts are provided by cysteine 2011, cysteine 2029, cysteine 2031, and cysteine 2052. Positions 2120-2208 (EFFTEVDGVR…ASSSASQLSA (89 aa)) are FKBP8-binding. A transcriptional activation region spans residues 2120 to 2332 (EFFTEVDGVR…PIPPPRRKRT (213 aa)). The interval 2135 to 2139 (PACKP) is interaction with non-structural protein 4A. The interaction with host SKP2 stretch occupies residues 2189-2441 (RLARGSPPSL…PCAAEESKLP (253 aa)). At serine 2194 the chain carries Phosphoserine; by host; in p56. Phosphoserine; by host; in p58 is present on residues serine 2197, serine 2201, serine 2204, serine 2207, and serine 2210. The tract at residues 2210-2249 (SLKAACTTRHTPPDADLIEANLLWRQEMGGNITRVESENK) is ISDR. An interaction with EIF2AK2/PKR region spans residues 2210 to 2275 (SLKAACTTRH…REVSVPAEIL (66 aa)). An NS4B-binding region spans residues 2249-2306 (KVVILDSFDPLRAEEDEREVSVPAEILRKSRKFPPALPVWARPDYNPPLLEPWKDPDY). The SH3-binding signature appears at 2322–2325 (PPIP). The Nuclear localization signal motif lies at 2326–2334 (PPRRKRTVV). A Glycyl lysine isopeptide (Lys-Gly) (interchain with G-Cter in ubiquitin) cross-link involves residue lysine 2350. Over residues 2351–2367 (TFGSSESSAAGSGTATA) the composition is skewed to low complexity. The interval 2351 to 2409 (TFGSSESSAAGSGTATAPPDQPSDDGDAGSDVESCSSMPPLEGEPGDPDLSDGSWSTVS) is disordered. Positions 2354-2377 (SSESSAAGSGTATAPPDQPSDDGD) are V3. Phosphoserine; by host occurs at positions 2448 and 2461. In terms of domain architecture, RdRp catalytic spans 2633–2751 (PMGFSYDTRC…ICESAGTQED (119 aa)). Aspartate 2639, aspartate 2737, and aspartate 2738 together coordinate Mg(2+). The chain crosses the membrane as a helical span at residues 2990–3010 (WFMLCLLLLSVGVGIYLLPNR).

Belongs to the hepacivirus polyprotein family. As to quaternary structure, homooligomer. Interacts with E1 (via C-terminus). Interacts with the non-structural protein 5A. Interacts (via N-terminus) with host STAT1 (via SH2 domain); this interaction results in decreased STAT1 phosphorylation and ubiquitin-mediated proteasome-dependent STAT1 degradation, leading to decreased IFN-stimulated gene transcription. Interacts with host STAT3; this interaction constitutively activates STAT3. Interacts with host LTBR receptor. Interacts with host TNFRSF1A receptor and possibly induces apoptosis. Interacts with host HNRPK. Interacts with host YWHAE. Interacts with host UBE3A/E6AP. Interacts with host DDX3X. Interacts with host APOA2. Interacts with host RXRA protein. Interacts with host SP110 isoform 3/Sp110b; this interaction sequesters the transcriptional corepressor SP110 away from the nucleus. Interacts with host CREB3 nuclear transcription protein; this interaction triggers cell transformation. Interacts with host ACY3. Interacts with host C1QR1. Interacts with host RBM24; this interaction, which enhances the interaction of the mature core protein with 5'-UTR, may inhibit viral translation and favor replication. Interacts with host EIF2AK2/PKR; this interaction induces the autophosphorylation of EIF2AK2. Part of the viral assembly initiation complex composed of NS2, E1, E2, NS3, NS4A, NS5A and the mature core protein. Forms a heterodimer with envelope glycoprotein E2. Interacts with mature core protein. Interacts with protease NS2. The heterodimer E1/E2 interacts with host CLDN1; this interaction plays a role in viral entry into host cell. Interacts with host SPSB2 (via C-terminus). Part of the viral assembly initiation complex composed of NS2, E1, E2, NS3, NS4A, NS5A and the mature core protein. Interacts with host NEURL3; this interaction prevents E1 binding to glycoprotein E2. In terms of assembly, forms a heterodimer with envelope glycoprotein E1. Interacts with host CD81 and SCARB1 receptors; these interactions play a role in viral entry into host cell. Interacts with host EIF2AK2/PKR; this interaction inhibits EIF2AK2 and probably allows the virus to evade the innate immune response. Interacts with host CD209/DC-SIGN and CLEC4M/DC-SIGNR. Interact with host SPCS1; this interaction is essential for viral particle assembly. Interacts with protease NS2. The heterodimer E1/E2 interacts with host CLDN1; this interaction plays a role in viral entry into host cell. Part of the viral assembly initiation complex composed of NS2, E1, E2, NS3, NS4A, NS5A and the mature core protein. Interacts with host SLC3A2/4F2hc; the interaction may facilitate viral entry into host cell. Interacts with human PLSCR1. As to quaternary structure, homohexamer. Homoheptamer. Interacts with protease NS2. Homodimer. Interacts with host SPCS1; this interaction is essential for viral particle assembly. Interacts with envelope glycoprotein E1. Interacts with envelope glycoprotein E2. Interacts with viroporin p7. Interacts with serine protease/helicase NS3. Part of the replication complex composed of NS2, NS3, NS4A, NS4B, NS5A and the RNA-directed RNA polymerase embedded in an ER-derived membranous web. Part of the viral assembly initiation complex composed of NS2, E1, E2, NS3, NS4A, NS5A and the mature core protein. In terms of assembly, interacts with protease NS2. Interacts with non-structural protein 4A; this interaction stabilizes the folding of NS3 serine protease. NS3-NS4A interaction is essential for NS3 activation and allows membrane anchorage of the latter. NS3/NS4A complex also prevents phosphorylation of host IRF3, thus preventing the establishment of dsRNA induced antiviral state. Interacts with host MAVS; this interaction leads to the cleavage and inhibition of host MAVS. Interacts with host TICAM1; this interaction leads to the cleavage and inhibition of host TICAM1. Interacts with host TANK-binding kinase/TBK1; this interaction results in the inhibition of the association between TBK1 and IRF3, which leads to the inhibition of IRF3 activation. Interacts with host RBM24. Part of the replication complex composed of NS2, NS3, NS4A, NS4B, NS5A and the RNA-directed RNA polymerase embedded in an ER-derived membranous web. Part of the viral assembly initiation complex composed of NS2, E1, E2, NS3, NS4A, NS5A and the mature core protein. As to quaternary structure, interacts with NS3 serine protease; this interaction stabilizes the folding of NS3 serine protease. NS3-NS4A interaction is essential for NS3 activation and allows membrane anchorage of the latter. Interacts with non-structural protein 5A (via N-terminus). Part of the replication complex composed of NS2, NS3, NS4A, NS4B, NS5A and the RNA-directed RNA polymerase embedded in an ER-derived membranous web. Part of the viral assembly initiation complex composed of NS2, E1, E2, NS3, NS4A, NS5A and the mature core protein. Homomultimer. Interacts with non-structural protein NS5A. Interacts with host PLA2G4C; this interaction likely initiates the recruitment of replication complexes to lipid droplets. Interacts with host STING; this interaction disrupts the interaction between STING and TBK1 thereby suppressing the interferon signaling. Part of the replication complex composed of NS2, NS3, NS4A, NS4B, NS5A and the RNA-directed RNA polymerase embedded in an ER-derived membranous web. In terms of assembly, monomer. Homodimer; dimerization is required for RNA-binding. Interacts with the mature core protein. Interacts (via N-terminus) with non-structural protein 4A. Interacts with non-structural protein 4B. Interacts (via region D2) with RNA-directed RNA polymerase. Part of the viral assembly initiation complex composed of NS2, E1, E2, NS3, NS4A, NS5A and the mature core protein. Part of the replication complex composed of NS2, NS3, NS4A, NS4B, NS5A and the RNA-directed RNA polymerase embedded in an ER-derived membranous web. Interacts with host GRB2. Interacts with host BIN1. Interacts with host PIK3R1. Interacts with host SRCAP. Interacts with host FKBP8. Interacts (via C-terminus) with host VAPB (via MSP domain). Interacts with host EIF2AK2/PKR; this interaction leads to disruption of EIF2AK2 dimerization by NS5A and probably allows the virus to evade the innate immune response. Interacts (via N-terminus) with host PACSIN2 (via N-terminus); this interaction attenuates protein kinase C alpha-mediated phosphorylation of PACSIN2 by disrupting the interaction between PACSIN2 and PRKCA. Interacts (via N-terminus) with host SRC kinase (via SH2 domain). Interacts with most Src-family kinases. Interacts with host IFI27 and SKP2; promotes the ubiquitin-mediated proteasomal degradation of NS5A. Interacts with host GPS2. Interacts with host TNFRSF21; this interaction allows the modulation by the virus of JNK, p38 MAPK, STAT3, and Akt signaling pathways in a DR6-dependent manner. Interacts (via N-terminus) with host CIDEB (via N-terminus); this interaction seems to regulate the association of HCV particles with APOE. Interacts with host CHKA/Choline Kinase-alpha; CHKA bridges host PI4KA and NS5A and potentiates NS5A-stimulated PI4KA activity, which then facilitates the targeting of the ternary complex to the ER for viral replication. Interacts with host SPSB2 (via C-terminus); this interaction targets NS5A for ubiquitination and degradation. Interacts with host RAB18; this interaction may promote the association of NS5A and other replicase components with lipid droplets. Interacts (via region D2) with host PPIA/CYPA; the interaction stimulates RNA-binding ability of NS5A and is dependent on the peptidyl-prolyl cis-trans isomerase activity of PPIA/CYPA. Interacts with host TRIM14; this interaction induces the degradation of NS5A. As to quaternary structure, homooligomer. Interacts with non-structural protein 5A. Interacts with host VAPB. Interacts with host PRK2/PKN2. Interacts with host HNRNPA1 and SEPT6; these interactions facilitate viral replication. Part of the replication complex composed of NS2, NS3, NS4A, NS4B, NS5A and the RNA-directed RNA polymerase. The cofactor is Zn(2+). Mg(2+) serves as cofactor. Specific enzymatic cleavages in vivo yield mature proteins. The structural proteins, core, E1, E2 and p7 are produced by proteolytic processing by host signal peptidases. The core protein precursor is synthesized as a 23 kDa, which is retained in the ER membrane through the hydrophobic signal peptide. Cleavage by the signal peptidase releases the 21 kDa mature core protein. The cleavage of the core protein precursor occurs between aminoacids 176 and 188 but the exact cleavage site is not known. Some degraded forms of the core protein appear as well during the course of infection. The other proteins (p7, NS2, NS3, NS4A, NS4B, NS5A and NS5B) are cleaved by the viral proteases. Autoprocessing between NS2 and NS3 is mediated by the NS2 cysteine protease catalytic domain and regulated by the NS3 N-terminal domain. In terms of processing, phosphorylated by host PKC and PKA. Post-translationally, ubiquitinated; mediated by UBE3A and leading to core protein subsequent proteasomal degradation. Highly N-glycosylated. In terms of processing, palmitoylation is required for NS2/3 autoprocessing and E2 recruitment to membranes. Post-translationally, palmitoylated. This modification may play a role in its polymerization or in protein-protein interactions. Phosphorylated on serines in a basal form termed p56. p58 is a hyperphosphorylated form of p56. p56 and p58 coexist in the cell in roughly equivalent amounts. Hyperphosphorylation is dependent on the presence of NS4A. Host CSNK1A1/CKI-alpha or RPS6KB1 kinases may be responsible for NS5A phosphorylation. In terms of processing, tyrosine phosphorylation is essential for the interaction with host SRC. Post-translationally, the N-terminus is phosphorylated by host PRK2/PKN2. Ubiquitinated. Ubiquitination, most probably at Lys-2350, mediated by host IFI27 and SKP2 leads to proteasomal degradation, restricting viral infection. Ubiquitination by host TRIM22 leads to interruption of viral replication.

The protein resides in the host endoplasmic reticulum membrane. The protein localises to the host mitochondrion membrane. It localises to the virion. Its subcellular location is the host cytoplasm. It is found in the host nucleus. The protein resides in the host lipid droplet. The protein localises to the virion membrane. It localises to the host mitochondrion. Its subcellular location is the host cell membrane. It is found in the host perinuclear region. It catalyses the reaction Hydrolysis of four peptide bonds in the viral precursor polyprotein, commonly with Asp or Glu in the P6 position, Cys or Thr in P1 and Ser or Ala in P1'.. The enzyme catalyses a ribonucleoside 5'-triphosphate + H2O = a ribonucleoside 5'-diphosphate + phosphate + H(+). It carries out the reaction ATP + H2O = ADP + phosphate + H(+). The catalysed reaction is RNA(n) + a ribonucleoside 5'-triphosphate = RNA(n+1) + diphosphate. Inhibited by the antiviral drug hexamethylene amiloride. Inhibition by amantadine appears to be genotype-dependent. Also inhibited by long-alkyl-chain iminosugar derivatives. Its activity is regulated as follows. Activity is up-regulated by PRK2/PKN2-mediated phosphorylation. Functionally, packages viral RNA to form a viral nucleocapsid, and promotes virion budding. Participates in the viral particle production as a result of its interaction with the non-structural protein 5A. Binds RNA and may function as a RNA chaperone to induce the RNA structural rearrangements taking place during virus replication. Modulates viral translation initiation by interacting with viral IRES and 40S ribosomal subunit. Affects various cell signaling pathways, host immunity and lipid metabolism. Prevents the establishment of cellular antiviral state by blocking the interferon-alpha/beta (IFN-alpha/beta) and IFN-gamma signaling pathways and by blocking the formation of phosphorylated STAT1 and promoting ubiquitin-mediated proteasome-dependent degradation of STAT1. Activates STAT3 leading to cellular transformation. Regulates the activity of cellular genes, including c-myc and c-fos. May repress the promoter of p53, and sequester CREB3 and SP110 isoform 3/Sp110b in the cytoplasm. Represses cell cycle negative regulating factor CDKN1A, thereby interrupting an important check point of normal cell cycle regulation. Targets transcription factors involved in the regulation of inflammatory responses and in the immune response: suppresses TNF-induced NF-kappa-B activation, and activates AP-1. Binds to dendritic cells (DCs) via C1QR1, resulting in down-regulation of T-lymphocytes proliferation. Alters lipid metabolism by interacting with hepatocellular proteins involved in lipid accumulation and storage. Induces up-regulation of FAS promoter activity, and thereby contributes to the increased triglyceride accumulation in hepatocytes (steatosis). In terms of biological role, forms a heterodimer with envelope glycoprotein E2, which mediates virus attachment to the host cell, virion internalization through clathrin-dependent endocytosis and fusion with host membrane. Fusion with the host cell is most likely mediated by both E1 and E2, through conformational rearrangements of the heterodimer required for fusion rather than a classical class II fusion mechanism. E1/E2 heterodimer binds host apolipoproteins such as APOB and ApoE thereby forming a lipo-viro-particle (LVP). APOE associated to the LVP allows the initial virus attachment to cell surface receptors such as the heparan sulfate proteoglycans (HSPGs), syndecan-1 (SDC1), syndecan-1 (SDC2), the low-density lipoprotein receptor (LDLR) and scavenger receptor class B type I (SCARB1). The cholesterol transfer activity of SCARB1 allows E2 exposure and binding of E2 to SCARB1 and the tetraspanin CD81. E1/E2 heterodimer binding on CD81 activates the epithelial growth factor receptor (EGFR) signaling pathway. Diffusion of the complex E1-E2-EGFR-SCARB1-CD81 to the cell lateral membrane allows further interaction with Claudin 1 (CLDN1) and occludin (OCLN) to finally trigger HCV entry. Its function is as follows. Forms a heterodimer with envelope glycoprotein E1, which mediates virus attachment to the host cell, virion internalization through clathrin-dependent endocytosis and fusion with host membrane. Fusion with the host cell is most likely mediated by both E1 and E2, through conformational rearrangements of the heterodimer required for fusion rather than a classical class II fusion mechanism. The interaction between envelope glycoprotein E2 and host apolipoprotein E/APOE allows the proper assembly, maturation and infectivity of the viral particles. This interaction is probably promoted via the up-regulation of cellular autophagy by the virus. E1/E2 heterodimer binds host apolipoproteins such as APOB and APOE thereby forming a lipo-viro-particle (LVP). APOE associated to the LVP allows the initial virus attachment to cell surface receptors such as the heparan sulfate proteoglycans (HSPGs), syndecan-1 (SDC1), syndecan-1 (SDC2), the low-density lipoprotein receptor (LDLR) and scavenger receptor class B type I (SCARB1). The cholesterol transfer activity of SCARB1 allows E2 exposure and binding of E2 to SCARB1 and the tetraspanin CD81. E1/E2 heterodimer binding on CD81 activates the epithelial growth factor receptor (EGFR) signaling pathway. Diffusion of the complex E1-E2-EGFR-SCARB1-CD81 to the cell lateral membrane allows further interaction with Claudin 1 (CLDN1) and occludin (OCLN) to finally trigger HCV entry. Inhibits host EIF2AK2/PKR activation, preventing the establishment of an antiviral state. Viral ligand for CD209/DC-SIGN and CLEC4M/DC-SIGNR, which are respectively found on dendritic cells (DCs), and on liver sinusoidal endothelial cells and macrophage-like cells of lymph node sinuses. These interactions allow the capture of circulating HCV particles by these cells and subsequent facilitated transmission to permissive cells such as hepatocytes and lymphocyte subpopulations. The interaction between E2 and host amino acid transporter complex formed by SLC3A2 and SLC7A5/LAT1 may facilitate viral entry into host cell. Ion channel protein that acts as a viroporin and plays an essential role in the assembly, envelopment and secretion of viral particles. Regulates the host cell secretory pathway, which induces the intracellular retention of viral glycoproteins and favors assembly of viral particles. Creates a pore in acidic organelles and releases Ca(2+) and H(+) in the cytoplasm of infected cells, leading to a productive viral infection. High levels of cytoplasmic Ca(2+) may trigger membrane trafficking and transport of viral ER-associated proteins to viroplasms, sites of viral genome replication. This ionic imbalance induces the assembly of the inflammasome complex, which triggers the maturation of pro-IL-1beta into IL-1beta through the action of caspase-1. Targets also host mitochondria and induces mitochondrial depolarization. In addition of its role as a viroporin, acts as a lipid raft adhesion factor. Functionally, cysteine protease required for the proteolytic auto-cleavage between the non-structural proteins NS2 and NS3. The N-terminus of NS3 is required for the function of NS2 protease (active region NS2-3). Promotes the initiation of viral particle assembly by mediating the interaction between structural and non-structural proteins. In terms of biological role, displays three enzymatic activities: serine protease with a chymotrypsin-like fold, NTPase and RNA helicase. NS3 serine protease, in association with NS4A, is responsible for the cleavages of NS3-NS4A, NS4A-NS4B, NS4B-NS5A and NS5A-NS5B. The NS3/NS4A complex prevents phosphorylation of host IRF3, thus preventing the establishment of dsRNA induced antiviral state. The NS3/NS4A complex induces host amino acid transporter component SLC3A2, thus contributing to HCV propagation. NS3 RNA helicase binds to RNA and unwinds both dsDNA and dsRNA in the 3' to 5' direction, and likely resolves RNA complicated stable secondary structures in the template strand. Binds a single ATP and catalyzes the unzipping of a single base pair of dsRNA. Inhibits host antiviral proteins TBK1 and IRF3 thereby preventing the establishment of an antiviral state. Cleaves host MAVS/CARDIF thereby preventing the establishment of an antiviral state. Cleaves host TICAM1/TRIF, thereby disrupting TLR3 signaling and preventing the establishment of an antiviral state. Its function is as follows. Peptide cofactor which forms a non-covalent complex with the N-terminal of NS3 serine protease. The NS3/NS4A complex prevents phosphorylation of host IRF3, thus preventing the establishment of dsRNA induced antiviral state. The NS3/NS4A complex induces host amino acid transporter component SLC3A2, thus contributing to HCV propagation. Induces a specific membrane alteration that serves as a scaffold for the virus replication complex. This membrane alteration gives rise to the so-called ER-derived membranous web that contains the replication complex. NS4B self-interaction contributes to its function in membranous web formation. Promotes host TRIF protein degradation in a CASP8-dependent manner thereby inhibiting host TLR3-mediated interferon signaling. Disrupts the interaction between STING and TBK1 contributing to the inhibition of interferon signaling. Functionally, phosphorylated protein that is indispensable for viral replication and assembly. Both hypo- and hyperphosphorylated states are required for the viral life cycle. The hyperphosphorylated form of NS5A is an inhibitor of viral replication. Involved in RNA-binding and especially in binding to the viral genome. Zinc is essential for RNA-binding. Participates in the viral particle production as a result of its interaction with the mature viral core protein. Its interaction with host VAPB may target the viral replication complex to vesicles. Down-regulates viral IRES translation initiation. Mediates interferon resistance, presumably by interacting with and inhibiting host EIF2AK2/PKR. Prevents BIN1-induced apoptosis. Acts as a transcriptional activator of some host genes important for viral replication when localized in the nucleus. Via the interaction with host PACSIN2, modulates lipid droplet formation in order to promote virion assembly. Modulates TNFRSF21/DR6 signaling pathway for viral propagation. In terms of biological role, RNA-dependent RNA polymerase that performs primer-template recognition and RNA synthesis during viral replication. Initiates RNA transcription/replication at a flavin adenine dinucleotide (FAD), resulting in a 5'- FAD cap on viral RNAs. In this way, recognition of viral 5' RNA by host pattern recognition receptors can be bypassed, thereby evading activation of antiviral pathways. The protein is Genome polyprotein of Hepatitis C virus genotype 1b (isolate Taiwan) (HCV).